The primary structure comprises 1377 residues: DNA-directed RNA polymerase subunit beta'' (1377 aa).

Zn(2+) contacts are provided by Cys224, Cys294, Cys301, and Cys304.

Belongs to the RNA polymerase beta' chain family. RpoC2 subfamily. In plastids the minimal PEP RNA polymerase catalytic core is composed of four subunits: alpha, beta, beta', and beta''. When a (nuclear-encoded) sigma factor is associated with the core the holoenzyme is formed, which can initiate transcription. The cofactor is Zn(2+).

The protein resides in the plastid. The protein localises to the chloroplast. It catalyses the reaction RNA(n) + a ribonucleoside 5'-triphosphate = RNA(n+1) + diphosphate. In terms of biological role, DNA-dependent RNA polymerase catalyzes the transcription of DNA into RNA using the four ribonucleoside triphosphates as substrates. The sequence is that of DNA-directed RNA polymerase subunit beta'' from Calycanthus floridus var. glaucus (Eastern sweetshrub).